Consider the following 550-residue polypeptide: Luciferin 4-monooxygenase (550 aa).

The Microbody targeting signal signature appears at 548-550 (SKL).

It belongs to the ATP-dependent AMP-binding enzyme family. Mg(2+) is required as a cofactor.

It localises to the peroxisome. It catalyses the reaction firefly D-luciferin + ATP + O2 = firefly oxyluciferin + hnu + AMP + CO2 + diphosphate. Produces green light with a wavelength of 562 nm. This chain is Luciferin 4-monooxygenase, found in Photinus pyralis (Common eastern firefly).